A 228-amino-acid polypeptide reads, in one-letter code: LexA repressor (228 aa).

Positions 28–48 (IREIGEALDIRSTNGVNDHLK) form a DNA-binding region, H-T-H motif. Residues serine 146 and lysine 183 each act as for autocatalytic cleavage activity in the active site.

The protein belongs to the peptidase S24 family. As to quaternary structure, homodimer.

The enzyme catalyses Hydrolysis of Ala-|-Gly bond in repressor LexA.. Its function is as follows. Represses a number of genes involved in the response to DNA damage (SOS response), including recA and lexA. In the presence of single-stranded DNA, RecA interacts with LexA causing an autocatalytic cleavage which disrupts the DNA-binding part of LexA, leading to derepression of the SOS regulon and eventually DNA repair. This chain is LexA repressor, found in Anaeromyxobacter dehalogenans (strain 2CP-1 / ATCC BAA-258).